The sequence spans 109 residues: Oncomodulin (109 aa).

Ser-2 carries the post-translational modification N-acetylserine. EF-hand domains lie at 39 to 74 and 78 to 109; these read MSASQVKDIFRFIDNDQSGYLDGDELKYFLQKFQSD and LTESETKSLMDAADNDGDGKIGADEFQEMVHS. Residues Asp-52, Asp-54, Ser-56, Tyr-58, Glu-63, Asp-91, Asp-93, Asp-95, Lys-97, and Glu-102 each coordinate Ca(2+).

This sequence belongs to the parvalbumin family. Found in tumor tissues and not detected in normal tissues.

Has some calmodulin-like activity with respect to enzyme activation and growth regulation. Binds two calcium ions. This Rattus norvegicus (Rat) protein is Oncomodulin (Ocm).